A 243-amino-acid polypeptide reads, in one-letter code: Transcription factor TCP6 (243 aa).

The segment at 1–55 is disordered; sequence MVMEPKKNQNLPSFLNPSRQNQDNDKKRKQTEVKGFDIVVGEKRKKKENEEEDQE. Over residues 8-21 the composition is skewed to polar residues; the sequence is NQNLPSFLNPSRQN. A compositionally biased stretch (basic and acidic residues) spans 22-35; that stretch reads QDNDKKRKQTEVKG. Positions 42 to 66 form a coiled coil; that stretch reads EKRKKKENEEEDQEIQILYEKEKKK. The TCP domain maps to 68–122; the sequence is NKDRHLKVEGRGRRVRLPPLCAARIYQLTKELGHKSDGETLEWLLQHAEPSILSA.

Interacts with SPL.

The protein resides in the nucleus. In Arabidopsis thaliana (Mouse-ear cress), this protein is Transcription factor TCP6 (TCP6).